Here is a 217-residue protein sequence, read N- to C-terminus: N-(5'-phosphoribosyl)anthranilate isomerase (217 aa).

The protein belongs to the TrpF family.

The catalysed reaction is N-(5-phospho-beta-D-ribosyl)anthranilate = 1-(2-carboxyphenylamino)-1-deoxy-D-ribulose 5-phosphate. It participates in amino-acid biosynthesis; L-tryptophan biosynthesis; L-tryptophan from chorismate: step 3/5. The chain is N-(5'-phosphoribosyl)anthranilate isomerase from Chlorobium phaeobacteroides (strain BS1).